Consider the following 380-residue polypeptide: Cytochrome b (380 aa).

4 consecutive transmembrane segments (helical) span residues 34–54 (FGSL…FLAM), 78–99 (WLLR…YFHI), 114–134 (WNIG…GYVL), and 179–199 (FFTF…IHLL). 2 residues coordinate heme b: H84 and H98. H197 lines the heme b pocket. H202 is a binding site for a ubiquinone. Transmembrane regions (helical) follow at residues 227 to 247 (FKDL…STFA), 289 to 309 (LGGV…PITH), 321 to 341 (TAKA…WIGG), and 348 to 368 (FISI…LIIP).

The protein belongs to the cytochrome b family. As to quaternary structure, the cytochrome bc1 complex contains 3 respiratory subunits (MT-CYB, CYC1 and UQCRFS1), 2 core proteins (UQCRC1 and UQCRC2) and probably 6 low-molecular weight proteins. Heme b serves as cofactor.

It is found in the mitochondrion inner membrane. In terms of biological role, component of the ubiquinol-cytochrome c reductase complex (complex III or cytochrome b-c1 complex) that is part of the mitochondrial respiratory chain. The b-c1 complex mediates electron transfer from ubiquinol to cytochrome c. Contributes to the generation of a proton gradient across the mitochondrial membrane that is then used for ATP synthesis. In Glandirana rugosa (Japanese wrinkled frog), this protein is Cytochrome b (mt-cyb).